The chain runs to 260 residues: Ribosomal protein L11 methyltransferase (260 aa).

The S-adenosyl-L-methionine site is built by T119, G140, D162, and N203.

It belongs to the methyltransferase superfamily. PrmA family.

It is found in the cytoplasm. It catalyses the reaction L-lysyl-[protein] + 3 S-adenosyl-L-methionine = N(6),N(6),N(6)-trimethyl-L-lysyl-[protein] + 3 S-adenosyl-L-homocysteine + 3 H(+). Functionally, methylates ribosomal protein L11. This is Ribosomal protein L11 methyltransferase from Thermosipho africanus (strain TCF52B).